The sequence spans 88 residues: Small ribosomal subunit protein uS17 (88 aa).

The protein belongs to the universal ribosomal protein uS17 family. In terms of assembly, part of the 30S ribosomal subunit.

Functionally, one of the primary rRNA binding proteins, it binds specifically to the 5'-end of 16S ribosomal RNA. The polypeptide is Small ribosomal subunit protein uS17 (Ectopseudomonas mendocina (strain ymp) (Pseudomonas mendocina)).